A 522-amino-acid polypeptide reads, in one-letter code: Alanine aminotransferase 2 (522 aa).

The residue at position 340 (K340) is an N6-(pyridoxal phosphate)lysine. K414, K504, and K511 each carry N6-acetyllysine.

It belongs to the class-I pyridoxal-phosphate-dependent aminotransferase family. Alanine aminotransferase subfamily. In terms of assembly, homodimer. Requires pyridoxal 5'-phosphate as cofactor. In terms of tissue distribution, specifically induced in fatty liver. Highly expressed in muscle, liver and white adipose tissue. Moderately expressed in brain and kidney and expressed at low levels in the heart.

It catalyses the reaction L-alanine + 2-oxoglutarate = pyruvate + L-glutamate. It functions in the pathway amino-acid degradation; L-alanine degradation via transaminase pathway; pyruvate from L-alanine: step 1/1. In terms of biological role, catalyzes the reversible transamination between alanine and 2-oxoglutarate to form pyruvate and glutamate. The protein is Alanine aminotransferase 2 (Gpt2) of Mus musculus (Mouse).